Reading from the N-terminus, the 58-residue chain is Small ribosomal subunit protein bS21 (58 aa).

This sequence belongs to the bacterial ribosomal protein bS21 family.

The polypeptide is Small ribosomal subunit protein bS21 (Staphylococcus saprophyticus subsp. saprophyticus (strain ATCC 15305 / DSM 20229 / NCIMB 8711 / NCTC 7292 / S-41)).